Here is a 262-residue protein sequence, read N- to C-terminus: uncharacterized protein (262 aa).

Positions 41–118 form a coiled coil; sequence ELQKNEKIDK…EEKAEDFINK (78 aa).

This is an uncharacterized protein from Plasmodium falciparum (isolate 3D7).